We begin with the raw amino-acid sequence, 991 residues long: Ribonuclease TUDOR 1 (991 aa).

Ala-2 is subject to N-acetylalanine. TNase-like domains lie at 8–151 (QWLK…RWSK), 186–364 (KPME…MWAN), 378–557 (QNFT…IHSA), and 587–714 (RRIP…IWEN). The disordered stretch occupies residues 227 to 250 (RTTNGSVVETVPDEPNGDVSAESR). The Tudor domain occupies 782–847 (NPKRGDIVLA…RPIDPSVSAA (66 aa)). Tyr-970 bears the Phosphotyrosine mark. The segment at 971 to 991 (GDIESDDEDTGPARKPAGGRR) is disordered. Ser-975 carries the phosphoserine modification. Thr-980 is modified (phosphothreonine).

Expressed in seeds, leaves, flowers, roots and siliques (at protein level). Accumulates in the cap and elongation zone of the root apices (at protein level).

The protein resides in the cytoplasm. Its subcellular location is the cytoplasmic granule. The protein localises to the perinuclear region. It is found in the endoplasmic reticulum. Its activity is regulated as follows. Repressed by the specific inhibitor 3',5'-deoxythymidine bisphosphate (pdTp); this RNase activity inhibition impairs subcellular relocation upon abiotic stress and leads to reduced stress resistance. Cytoprotective ribonuclease (RNase) required for resistance to abiotic stresses, acting as a positive regulator of mRNA decapping during stress. Essential for the integrity and function of cytoplasmic messenger ribonucleoprotein (mRNP) complexes called stress granules (SGs) and processing bodies (PBs), sites of post-transcriptional gene regulation during stress (e.g. salt and heat). Involved in gibberellic acid (GA) biosynthesis. Essential for stress tolerance, probably by regulating mRNAs entering the secretory pathway. Component of stress granules (SGs) that regulates growth under salt stress by modulating levels of GA20OX3 mRNA. Binds GA20OX3 mRNA. May inhibit the degradation of mRNAs involved in stress adaptation. This Arabidopsis thaliana (Mouse-ear cress) protein is Ribonuclease TUDOR 1.